The chain runs to 174 residues: Cytochrome c oxidase subunit 5A, mitochondrial (174 aa).

The transit peptide at 1–29 directs the protein to the mitochondrion; the sequence is MASLTRAVTRLAIAGRQAVRTIATTTPVS.

The protein belongs to the cytochrome c oxidase subunit 5A family. As to quaternary structure, component of the cytochrome c oxidase (complex IV, CIV), a multisubunit enzyme composed of a catalytic core of 3 subunits and several supernumerary subunits. The complex exists as a monomer or a dimer and forms supercomplexes (SCs) in the inner mitochondrial membrane with ubiquinol-cytochrome c oxidoreductase (cytochrome b-c1 complex, complex III, CIII).

The protein resides in the mitochondrion inner membrane. It functions in the pathway energy metabolism; oxidative phosphorylation. Functionally, component of the cytochrome c oxidase, the last enzyme in the mitochondrial electron transport chain which drives oxidative phosphorylation. The respiratory chain contains 3 multisubunit complexes succinate dehydrogenase (complex II, CII), ubiquinol-cytochrome c oxidoreductase (cytochrome b-c1 complex, complex III, CIII) and cytochrome c oxidase (complex IV, CIV), that cooperate to transfer electrons derived from NADH and succinate to molecular oxygen, creating an electrochemical gradient over the inner membrane that drives transmembrane transport and the ATP synthase. Cytochrome c oxidase is the component of the respiratory chain that catalyzes the reduction of oxygen to water. Electrons originating from reduced cytochrome c in the intermembrane space (IMS) are transferred via the dinuclear copper A center (CU(A)) of subunit 2 and heme A of subunit 1 to the active site in subunit 1, a binuclear center (BNC) formed by heme A3 and copper B (CU(B)). The BNC reduces molecular oxygen to 2 water molecules using 4 electrons from cytochrome c in the IMS and 4 protons from the mitochondrial matrix. The sequence is that of Cytochrome c oxidase subunit 5A, mitochondrial from Caenorhabditis elegans.